Consider the following 448-residue polypeptide: Probable glycine dehydrogenase (decarboxylating) subunit 1 (448 aa).

It belongs to the GcvP family. N-terminal subunit subfamily. The glycine cleavage system is composed of four proteins: P, T, L and H. In this organism, the P 'protein' is a heterodimer of two subunits.

The catalysed reaction is N(6)-[(R)-lipoyl]-L-lysyl-[glycine-cleavage complex H protein] + glycine + H(+) = N(6)-[(R)-S(8)-aminomethyldihydrolipoyl]-L-lysyl-[glycine-cleavage complex H protein] + CO2. Functionally, the glycine cleavage system catalyzes the degradation of glycine. The P protein binds the alpha-amino group of glycine through its pyridoxal phosphate cofactor; CO(2) is released and the remaining methylamine moiety is then transferred to the lipoamide cofactor of the H protein. The polypeptide is Probable glycine dehydrogenase (decarboxylating) subunit 1 (Staphylococcus epidermidis (strain ATCC 35984 / DSM 28319 / BCRC 17069 / CCUG 31568 / BM 3577 / RP62A)).